Reading from the N-terminus, the 131-residue chain is Small ribosomal subunit protein uS8 (131 aa).

The protein belongs to the universal ribosomal protein uS8 family. As to quaternary structure, part of the 30S ribosomal subunit. Contacts proteins S5 and S12.

Its function is as follows. One of the primary rRNA binding proteins, it binds directly to 16S rRNA central domain where it helps coordinate assembly of the platform of the 30S subunit. In Helicobacter pylori (strain P12), this protein is Small ribosomal subunit protein uS8.